The chain runs to 407 residues: Argininosuccinate synthase (407 aa).

ATP-binding positions include 13 to 21 (AYSGGLDTS) and Ala40. L-citrulline-binding residues include Tyr91 and Ser96. Gly121 is an ATP binding site. Residues Thr123, Asn127, and Asp128 each coordinate L-aspartate. Position 127 (Asn127) interacts with L-citrulline. Arg131, Ser182, Ser191, Glu267, and Tyr279 together coordinate L-citrulline.

This sequence belongs to the argininosuccinate synthase family. Type 1 subfamily. As to quaternary structure, homotetramer.

Its subcellular location is the cytoplasm. The catalysed reaction is L-citrulline + L-aspartate + ATP = 2-(N(omega)-L-arginino)succinate + AMP + diphosphate + H(+). Its pathway is amino-acid biosynthesis; L-arginine biosynthesis; L-arginine from L-ornithine and carbamoyl phosphate: step 2/3. The polypeptide is Argininosuccinate synthase (Bartonella bacilliformis (strain ATCC 35685 / KC583 / Herrer 020/F12,63)).